The sequence spans 512 residues: Ribonuclease Y (512 aa).

A helical membrane pass occupies residues 2 to 22 (VGMYIIIPIVTFIIGGLLAWL). A KH domain is found at 202–262 (SITVFHIESD…VRREIARLAL (61 aa)). Residues 328 to 421 (LLQHARETAN…VQVCDAISGA (94 aa)) form the HD domain.

Belongs to the RNase Y family.

The protein localises to the cell membrane. In terms of biological role, endoribonuclease that initiates mRNA decay. The protein is Ribonuclease Y of Parabacteroides distasonis (strain ATCC 8503 / DSM 20701 / CIP 104284 / JCM 5825 / NCTC 11152).